The chain runs to 454 residues: V-type ATP synthase subunit I 2 (454 aa).

Residues 101–121 (EREGDAPSVPRGKSSVAHDSA) form a disordered region. A run of 4 helical transmembrane segments spans residues 254–274 (LLFG…VLGL), 293–313 (VFLS…EFFA), 351–371 (MAFF…GLII), and 424–444 (ACLS…SVCV).

Belongs to the V-ATPase 116 kDa subunit family.

The protein resides in the cell membrane. Functionally, produces ATP from ADP in the presence of a proton gradient across the membrane. The chain is V-type ATP synthase subunit I 2 (atpI2) from Treponema pallidum (strain Nichols).